The following is a 244-amino-acid chain: DNA repair protein RecO (244 aa).

This sequence belongs to the RecO family.

Functionally, involved in DNA repair and RecF pathway recombination. The protein is DNA repair protein RecO of Polynucleobacter asymbioticus (strain DSM 18221 / CIP 109841 / QLW-P1DMWA-1) (Polynucleobacter necessarius subsp. asymbioticus).